Consider the following 144-residue polypeptide: Large-conductance mechanosensitive channel (144 aa).

2 consecutive transmembrane segments (helical) span residues 16 to 36 (VIDLAVGVIIGAAFGKIVDSV) and 86 to 106 (GNFLTIVVNFVILAFIIFMMV).

The protein belongs to the MscL family. In terms of assembly, homopentamer.

It is found in the cell inner membrane. Its function is as follows. Channel that opens in response to stretch forces in the membrane lipid bilayer. May participate in the regulation of osmotic pressure changes within the cell. The sequence is that of Large-conductance mechanosensitive channel from Cupriavidus metallidurans (strain ATCC 43123 / DSM 2839 / NBRC 102507 / CH34) (Ralstonia metallidurans).